The primary structure comprises 337 residues: LIX1-like protein (337 aa).

The segment at 1–64 (METMRAQRLQ…PLLLSGAPGL (64 aa)) is disordered. Residues 26–38 (PGVTGAAAATATP) are compositionally biased toward low complexity. Residues 39–56 (PAGPPPAPPPPAPPPPPL) are compositionally biased toward pro residues.

It belongs to the LIX1 family.

This is LIX1-like protein (LIX1L) from Homo sapiens (Human).